A 313-amino-acid polypeptide reads, in one-letter code: Olfactory receptor 1G1 (313 aa).

Topologically, residues 1-25 (MEGKNLTSISEFFLLGFSEQLEEQK) are extracellular. The N-linked (GlcNAc...) asparagine glycan is linked to Asn5. Residues 26 to 49 (ALFGSFLFMYLVTVAGNLLIILVI) form a helical membrane-spanning segment. Topologically, residues 50-57 (ITDTQLHT) are cytoplasmic. The chain crosses the membrane as a helical span at residues 58 to 79 (PMYFFLANLSLADACFVSTTVP). Over 80–100 (KMLANIQIQSQAISYSGCLLQ) the chain is Extracellular. A disulfide bridge connects residues Cys97 and Cys189. The helical transmembrane segment at 101–120 (LYFFMLFVMLEAFLLAVMAY) threads the bilayer. Residues 121-140 (DRYVAICHPLHYILIMSPGL) lie on the Cytoplasmic side of the membrane. A helical membrane pass occupies residues 141–158 (CVFLVSASWIMNALHSLL). Residues 159–196 (HTLLMNSLSFCANHEIPHFFCDIDPLLSLSCTDPFTNE) are Extracellular-facing. A helical membrane pass occupies residues 197-219 (LVIFITGGLTGLVCVLCLIISYT). Topologically, residues 220–236 (NIFSTILKIPSAQGKRK) are cytoplasmic. A helical transmembrane segment spans residues 237–259 (AFSTCGSHLSVVSLFFGTSFCVY). Residues 260-272 (FIPPSTRSAQKDT) are Extracellular-facing. Residues 273 to 292 (VASVMYTVVTPMLNPFIYSL) traverse the membrane as a helical segment. The Cytoplasmic portion of the chain corresponds to 293-313 (RNQEIKSSLRKLIWVREIHSP).

It belongs to the G-protein coupled receptor 1 family.

The protein localises to the cell membrane. Its function is as follows. Odorant receptor. The protein is Olfactory receptor 1G1 (OR1G1) of Gorilla gorilla gorilla (Western lowland gorilla).